The chain runs to 536 residues: Mitogen-activated protein kinase kinase kinase mom-4 (536 aa).

Positions 1–20 are enriched in low complexity; it reads MDNSSQSKPSSSSSSHSPSP. The interval 1 to 34 is disordered; sequence MDNSSQSKPSSSSSSHSPSPAAITPTQRTTRDSG. One can recognise a Protein kinase domain in the interval 51 to 305; the sequence is NLNSHYLGKG…SSECVEYFTL (255 aa). Residues 57–65 and K84 contribute to the ATP site; that span reads LGKGTYGLV. The active-site Proton acceptor is D176. The tract at residues 314–438 is disordered; sequence SVPLSDSSTN…EHRRDSNDEE (125 aa). 2 stretches are compositionally biased toward polar residues: residues 315–325 and 350–366; these read VPLSDSSTNGP and NNRT…QQPG. Residues 405–438 are compositionally biased toward basic and acidic residues; sequence KNFRDRAKSEQRQPHRDARPPPPFEHRRDSNDEE.

It belongs to the protein kinase superfamily. STE Ser/Thr protein kinase family. MAP kinase kinase kinase subfamily. In terms of assembly, interacts with, and is activated by, tap-1. Mg(2+) is required as a cofactor. Post-translationally, may be autophosphorylated.

It carries out the reaction L-seryl-[protein] + ATP = O-phospho-L-seryl-[protein] + ADP + H(+). The enzyme catalyses L-threonyl-[protein] + ATP = O-phospho-L-threonyl-[protein] + ADP + H(+). Its function is as follows. Part of the Wnt signaling pathway essential for the specification of the mesodermal cell fate in early embryos. Stimulates the wrm-1/lit-1-dependent phosphorylation of pop-1 and plays a role in the initial nuclear accumulation of wrm-1. This chain is Mitogen-activated protein kinase kinase kinase mom-4, found in Caenorhabditis elegans.